The sequence spans 174 residues: Shikimate kinase (174 aa).

ATP is bound at residue 15-20 (GTGKST). S19 is a binding site for Mg(2+). The substrate site is built by D37, R61, and G82. R120 is an ATP binding site. Substrate is bound at residue R138.

It belongs to the shikimate kinase family. In terms of assembly, monomer. The cofactor is Mg(2+).

It is found in the cytoplasm. The catalysed reaction is shikimate + ATP = 3-phosphoshikimate + ADP + H(+). The protein operates within metabolic intermediate biosynthesis; chorismate biosynthesis; chorismate from D-erythrose 4-phosphate and phosphoenolpyruvate: step 5/7. Catalyzes the specific phosphorylation of the 3-hydroxyl group of shikimic acid using ATP as a cosubstrate. This is Shikimate kinase from Staphylococcus aureus (strain Mu3 / ATCC 700698).